We begin with the raw amino-acid sequence, 83 residues long: Small ribosomal subunit protein eS21 (83 aa).

Position 1 is an N-acetylmethionine (methionine 1). Residue lysine 41 forms a Glycyl lysine isopeptide (Lys-Gly) (interchain with G-Cter in SUMO2) linkage. Lysine 81 carries the N6-acetyllysine modification.

This sequence belongs to the eukaryotic ribosomal protein eS21 family. As to quaternary structure, component of the 40S small ribosomal subunit.

It localises to the cytoplasm. It is found in the cytosol. Its subcellular location is the rough endoplasmic reticulum. Functionally, component of the small ribosomal subunit. The ribosome is a large ribonucleoprotein complex responsible for the synthesis of proteins in the cell. The sequence is that of Small ribosomal subunit protein eS21 (RPS21) from Sus scrofa (Pig).